Reading from the N-terminus, the 165-residue chain is Dihydrofolate reductase (165 aa).

A DHFR domain is found at 3–165 (VVGLIWAQST…RYRLHSYHRS (163 aa)). Residue 7-9 (IWA) coordinates substrate. Residues 8 to 9 (WA) and 16 to 21 (IGRDGG) each bind NADP(+). D29 lines the substrate pocket. 45–48 (GRRT) serves as a coordination point for NADP(+). Substrate is bound at residue R62. NADP(+)-binding positions include 67–70 (LSRQ) and 100–105 (IGGEQI). Position 119 (T119) interacts with substrate.

This sequence belongs to the dihydrofolate reductase family.

The enzyme catalyses (6S)-5,6,7,8-tetrahydrofolate + NADP(+) = 7,8-dihydrofolate + NADPH + H(+). It participates in cofactor biosynthesis; tetrahydrofolate biosynthesis; 5,6,7,8-tetrahydrofolate from 7,8-dihydrofolate: step 1/1. In terms of biological role, key enzyme in folate metabolism. Catalyzes an essential reaction for de novo glycine and purine synthesis, and for DNA precursor synthesis. This is Dihydrofolate reductase (folA) from Mycobacterium leprae (strain TN).